We begin with the raw amino-acid sequence, 356 residues long: Homoserine O-succinyltransferase (356 aa).

Residue Cys-146 is the Acyl-thioester intermediate of the active site. The substrate site is built by Lys-167 and Ser-196. Catalysis depends on His-239, which acts as the Proton acceptor. Residue Glu-241 is part of the active site. Arg-253 is a substrate binding site.

The protein belongs to the MetA family.

The protein localises to the cytoplasm. It carries out the reaction L-homoserine + succinyl-CoA = O-succinyl-L-homoserine + CoA. Its pathway is amino-acid biosynthesis; L-methionine biosynthesis via de novo pathway; O-succinyl-L-homoserine from L-homoserine: step 1/1. Functionally, transfers a succinyl group from succinyl-CoA to L-homoserine, forming succinyl-L-homoserine. The polypeptide is Homoserine O-succinyltransferase (Thioalkalivibrio nitratireducens (strain DSM 14787 / UNIQEM 213 / ALEN2)).